Here is an 85-residue protein sequence, read N- to C-terminus: MAHKKGVGSTRNGRDSESKRLGCKKYGGENVKAGNIIYRQRGTQIHPGTNVGCGKDYTLFALIDGVVKFERLGRDRKKVSVYPAS.

Positions 1-22 (MAHKKGVGSTRNGRDSESKRLG) are disordered.

It belongs to the bacterial ribosomal protein bL27 family.

The chain is Large ribosomal subunit protein bL27 from Geobacter metallireducens (strain ATCC 53774 / DSM 7210 / GS-15).